Reading from the N-terminus, the 470-residue chain is Mucin-like protein 3 (470 aa).

Positions 1–29 are cleaved as a signal peptide; that stretch reads MAQMTSGLYPMFGFFICLLFLPASWEAGA. Topologically, residues 30–401 are extracellular; it reads NTFQELQKTG…EGSNSFPAWA (372 aa). Disordered stretches follow at residues 57–234 and 248–318; these read RALS…HTIP and TKEA…KAPE. Polar residues predominate over residues 75–87; sequence STATQKPKRQCNT. Asn122 carries an N-linked (GlcNAc...) asparagine glycan. The segment covering 132-152 has biased composition (basic and acidic residues); sequence ARNERSADDHGSTNSEKRSDG. The span at 169–193 shows a compositional bias: polar residues; that stretch reads TRTSGTPVSSTETSTKLRTTSQKPE. The span at 194-203 shows a compositional bias: basic and acidic residues; it reads TSSHDSDLIR. A compositionally biased stretch (polar residues) spans 204–222; sequence KSTSLPVKSTEVSRTSYRT. Basic and acidic residues predominate over residues 260-273; that stretch reads KYERETRSASERIS. The span at 283–295 shows a compositional bias: polar residues; sequence HTPSAGETTTQVS. Asn325 is a glycosylation site (N-linked (GlcNAc...) asparagine). Residues 402-422 traverse the membrane as a helical segment; sequence IVVVILMAVIILLIFLGLIFL. At 423–470 the chain is on the cytoplasmic side; that stretch reads VSCASRARHQLTQNSEDAEPEDKGGRNSYPVYLMEQQNLNLNQISSPP.

The protein resides in the cell membrane. The protein localises to the cytoplasm. Its function is as follows. May modulate NF-kappaB signaling and play a role in cell growth. The protein is Mucin-like protein 3 of Rattus norvegicus (Rat).